Here is a 979-residue protein sequence, read N- to C-terminus: Glucose transport transcription regulator RGT1 (979 aa).

Basic and acidic residues-rich tracts occupy residues 1–14, 36–47, and 105–114; these read MSASRRESEPKEAE, DQCREKKTRCDF, and FKGDAGRPRA. Disordered regions lie at residues 1-47, 65-142, 165-219, 249-380, 563-590, and 926-954; these read MSAS…RCDF, TFER…LAPG, IDSL…EDCR, LPQQ…SIES, DTEASENEDEAGAGDAHASGTPERGKSA, and APESVKTPSSQPPSSSPGPNSDGSNNTSL. Residues 35-64 constitute a DNA-binding region (zn(2)-C6 fungal-type); that stretch reads CDQCREKKTRCDFSDERPICSACQRMGKTC. A compositionally biased stretch (low complexity) spans 132 to 142; sequence QPRLQPLLAPG. Composition is skewed to polar residues over residues 170-179 and 186-207; these read SDVSNRNGSE and SNASSGSQFYPASQAQYASQLP. The segment covering 251–263 has biased composition (low complexity); that stretch reads QQQQQQQQQNAQQ. Over residues 280-295 the composition is skewed to basic and acidic residues; sequence EHFKEFDEGFHSRKGS. Positions 296–309 are enriched in low complexity; sequence DVSVAVSPSSPVQV. Residues 310–329 show a composition bias toward polar residues; it reads TRTQQAGLNSESRDTNTATA. Basic residues predominate over residues 358-368; it reads GPRKQKRKNSN. Positions 369-380 are enriched in low complexity; it reads RNKPGSQSSIES. Acidic residues predominate over residues 565 to 574; it reads EASENEDEAG. Residues 942 to 953 are compositionally biased toward low complexity; that stretch reads PGPNSDGSNNTS.

Belongs to the EDS1/RGT1 family.

Its subcellular location is the nucleus. It localises to the cytoplasm. Its function is as follows. Glucose-responsive transcription factor that regulates expression of several glucose transporter (HXT) genes in response to glucose. In the absence of glucose, it functions as a transcriptional repressor, whereas high concentrations of glucose cause it to function as a transcriptional activator. In cells growing on low levels of glucose, has a neutral role, neither repressing nor activating transcription. The polypeptide is Glucose transport transcription regulator RGT1 (RGT1) (Lachancea thermotolerans (strain ATCC 56472 / CBS 6340 / NRRL Y-8284) (Yeast)).